Here is a 1887-residue protein sequence, read N- to C-terminus: Protein TIC 214 (1887 aa).

6 helical membrane-spanning segments follow: residues 18 to 38 (IINS…FSIG), 64 to 84 (FITG…HLAL), 87 to 107 (PHTI…WNNH), 124 to 144 (LSIQ…HFIL), 172 to 192 (VGWL…LVWI), and 221 to 241 (IFSI…PSPI). Disordered regions lie at residues 248-300 (EASK…EGWD), 786-805 (EEQT…DNKR), and 1569-1603 (LPSN…NLSP). The segment covering 256–268 (VESEEERDVEIET) has biased composition (acidic residues). Residues 775–816 (KEREFKILESREEQTKREEKKEKDKKEDNKRKEQARIAIEEA) adopt a coiled-coil conformation. Positions 1578 to 1597 (RSQETKEPPSQRERGSDIEN) are enriched in basic and acidic residues.

The protein belongs to the TIC214 family. In terms of assembly, part of the Tic complex.

Its subcellular location is the plastid. It is found in the chloroplast inner membrane. Its function is as follows. Involved in protein precursor import into chloroplasts. May be part of an intermediate translocation complex acting as a protein-conducting channel at the inner envelope. The polypeptide is Protein TIC 214 (Solanum bulbocastanum (Wild potato)).